The chain runs to 482 residues: Adenylosuccinate lyase (482 aa).

Substrate-binding positions include 14-15 (RY), 82-84 (RHD), and 108-109 (TS). The Proton donor/acceptor role is filled by H156. A Glycyl lysine isopeptide (Lys-Gly) (interchain with G-Cter in ubiquitin) cross-link involves residue K196. Q238 is a binding site for substrate. S286 functions as the Proton donor/acceptor in the catalytic mechanism. Residues R300, R326, S331, and R335 each coordinate substrate.

The protein belongs to the lyase 1 family. Adenylosuccinate lyase subfamily. As to quaternary structure, homotetramer. Residues from neighboring subunits contribute catalytic and substrate-binding residues to each active site.

The enzyme catalyses N(6)-(1,2-dicarboxyethyl)-AMP = fumarate + AMP. The catalysed reaction is (2S)-2-[5-amino-1-(5-phospho-beta-D-ribosyl)imidazole-4-carboxamido]succinate = 5-amino-1-(5-phospho-beta-D-ribosyl)imidazole-4-carboxamide + fumarate. It functions in the pathway purine metabolism; AMP biosynthesis via de novo pathway; AMP from IMP: step 2/2. Its pathway is purine metabolism; IMP biosynthesis via de novo pathway; 5-amino-1-(5-phospho-D-ribosyl)imidazole-4-carboxamide from 5-amino-1-(5-phospho-D-ribosyl)imidazole-4-carboxylate: step 2/2. The protein is Adenylosuccinate lyase (ADE13) of Saccharomyces cerevisiae (strain ATCC 204508 / S288c) (Baker's yeast).